The primary structure comprises 310 residues: Ribosomal RNA small subunit methyltransferase H (310 aa).

S-adenosyl-L-methionine contacts are provided by residues 33–35 (GGH), aspartate 52, phenylalanine 79, aspartate 98, and glutamine 105.

The protein belongs to the methyltransferase superfamily. RsmH family.

It is found in the cytoplasm. The catalysed reaction is cytidine(1402) in 16S rRNA + S-adenosyl-L-methionine = N(4)-methylcytidine(1402) in 16S rRNA + S-adenosyl-L-homocysteine + H(+). Functionally, specifically methylates the N4 position of cytidine in position 1402 (C1402) of 16S rRNA. The polypeptide is Ribosomal RNA small subunit methyltransferase H (Campylobacter jejuni subsp. doylei (strain ATCC BAA-1458 / RM4099 / 269.97)).